A 551-amino-acid polypeptide reads, in one-letter code: uncharacterized protein (551 aa).

Helical transmembrane passes span methionine 1 to serine 21, tryptophan 25 to serine 45, glycine 99 to asparagine 119, leucine 124 to tryptophan 144, phenylalanine 266 to tyrosine 286, and phenylalanine 490 to aspartate 510.

The protein resides in the cell membrane. This is an uncharacterized protein from Haemophilus influenzae (strain ATCC 51907 / DSM 11121 / KW20 / Rd).